The following is a 335-amino-acid chain: Phosphate acyltransferase (335 aa).

It belongs to the PlsX family. As to quaternary structure, homodimer. Probably interacts with PlsY.

The protein localises to the cytoplasm. It carries out the reaction a fatty acyl-[ACP] + phosphate = an acyl phosphate + holo-[ACP]. It functions in the pathway lipid metabolism; phospholipid metabolism. Its function is as follows. Catalyzes the reversible formation of acyl-phosphate (acyl-PO(4)) from acyl-[acyl-carrier-protein] (acyl-ACP). This enzyme utilizes acyl-ACP as fatty acyl donor, but not acyl-CoA. The chain is Phosphate acyltransferase from Streptococcus pyogenes serotype M18 (strain MGAS8232).